Reading from the N-terminus, the 373-residue chain is GTPase-activating protein gyp10 (373 aa).

Positions 35–220 (FLMKSLRKSV…RLFDFFISSH (186 aa)) constitute a Rab-GAP TBC domain. A helical transmembrane segment spans residues 343–363 (IFNGCNMLAAITVIGIGIVAS).

Its subcellular location is the endoplasmic reticulum membrane. Has a role in vesicular trafficking and septation during cytokinesis. This Schizosaccharomyces pombe (strain 972 / ATCC 24843) (Fission yeast) protein is GTPase-activating protein gyp10 (gyp10).